A 347-amino-acid polypeptide reads, in one-letter code: S-adenosylmethionine:tRNA ribosyltransferase-isomerase (347 aa).

The protein belongs to the QueA family. As to quaternary structure, monomer.

It is found in the cytoplasm. It carries out the reaction 7-aminomethyl-7-carbaguanosine(34) in tRNA + S-adenosyl-L-methionine = epoxyqueuosine(34) in tRNA + adenine + L-methionine + 2 H(+). It functions in the pathway tRNA modification; tRNA-queuosine biosynthesis. Transfers and isomerizes the ribose moiety from AdoMet to the 7-aminomethyl group of 7-deazaguanine (preQ1-tRNA) to give epoxyqueuosine (oQ-tRNA). The polypeptide is S-adenosylmethionine:tRNA ribosyltransferase-isomerase (Xylella fastidiosa (strain M23)).